Reading from the N-terminus, the 80-residue chain is UPF0125 protein XF_2346 (80 aa).

This sequence belongs to the UPF0125 (RnfH) family.

The protein is UPF0125 protein XF_2346 of Xylella fastidiosa (strain 9a5c).